The primary structure comprises 363 residues: Probable dual-specificity RNA methyltransferase RlmN (363 aa).

Residue glutamate 106 is the Proton acceptor of the active site. Positions 112-345 (HEYGNSVCVT…VTIRREQGHD (234 aa)) constitute a Radical SAM core domain. A disulfide bond links cysteine 119 and cysteine 350. Residues cysteine 126, cysteine 130, and cysteine 133 each coordinate [4Fe-4S] cluster. S-adenosyl-L-methionine contacts are provided by residues 176–177 (GE), serine 208, 231–233 (SLH), and asparagine 307. The S-methylcysteine intermediate role is filled by cysteine 350.

This sequence belongs to the radical SAM superfamily. RlmN family. [4Fe-4S] cluster is required as a cofactor.

It localises to the cytoplasm. It carries out the reaction adenosine(2503) in 23S rRNA + 2 reduced [2Fe-2S]-[ferredoxin] + 2 S-adenosyl-L-methionine = 2-methyladenosine(2503) in 23S rRNA + 5'-deoxyadenosine + L-methionine + 2 oxidized [2Fe-2S]-[ferredoxin] + S-adenosyl-L-homocysteine. The catalysed reaction is adenosine(37) in tRNA + 2 reduced [2Fe-2S]-[ferredoxin] + 2 S-adenosyl-L-methionine = 2-methyladenosine(37) in tRNA + 5'-deoxyadenosine + L-methionine + 2 oxidized [2Fe-2S]-[ferredoxin] + S-adenosyl-L-homocysteine. Functionally, specifically methylates position 2 of adenine 2503 in 23S rRNA and position 2 of adenine 37 in tRNAs. This is Probable dual-specificity RNA methyltransferase RlmN from Bacillus subtilis (strain 168).